The primary structure comprises 279 residues: GATA transcription factor 15 (279 aa).

Residues 52–94 (AYDDHSTVTTSPSSPSSSSTGSVDCTLSLGTPSSRRAEPVAAA) form a disordered region. Low complexity predominate over residues 58–74 (TVTTSPSSPSSSSTGSV). The GATA-type zinc finger occupies 154–179 (CANCGTASTPLWRNGPRGPKSLCNAC).

It belongs to the type IV zinc-finger family. Class B subfamily. In terms of tissue distribution, highly expressed in inflorescences. Expressed in vascular bundles of root stele within the elongation zones, of elongating upper internodes and of the junctions of leaf blades and sheaths.

In terms of biological role, probable transcription factor that regulates organogenesis during transition from the vegetative to the reproductive phase. Regulates the expression of CYP78A11/PLA1, HD3A and MADS1 during reproductive development in rice. May act upstream of CYP78A11/PLA1 during panicle development. Acts independently of the photoperiodic and gibberellin signaling pathways. This chain is GATA transcription factor 15, found in Oryza sativa subsp. japonica (Rice).